A 465-amino-acid chain; its full sequence is Ribosomal oxygenase 2 (465 aa).

The JmjC domain maps to 139 to 271 (QPQRFKDELW…NSWGDFLLDT (133 aa)). Histidine 179, aspartate 181, and histidine 240 together coordinate Fe cation. Serine 309 carries the phosphoserine modification.

It belongs to the ROX family. MINA53 subfamily. Fe(2+) is required as a cofactor. Expressed in liver, skeletal muscle, heart, pancreas, and placenta. Not detected in brain, lung or kidney. Expressed in several lung cancer tissues, but is barely detected in the adjacent non-cancerous tissues. Also highly expressed in several esophageal squamous cell carcinoma (ESCC), and colon cancer tissues, and in various cancer cell lines.

The protein resides in the nucleus. The protein localises to the nucleolus. It catalyses the reaction L-histidyl-[protein] + 2-oxoglutarate + O2 = (3S)-3-hydroxy-L-histidyl-[protein] + succinate + CO2. The enzyme catalyses L-histidyl-[ribosomal protein uL15] + 2-oxoglutarate + O2 = (3S)-3-hydroxy-L-histidyl-[ribosomal protein uL15] + succinate + CO2. In terms of biological role, oxygenase that can act as both a histone lysine demethylase and a ribosomal histidine hydroxylase. Is involved in the demethylation of trimethylated 'Lys-9' on histone H3 (H3K9me3), leading to an increase in ribosomal RNA expression. Also catalyzes the hydroxylation of 60S ribosomal protein L27a on 'His-39'. May play an important role in cell growth and survival. May be involved in ribosome biogenesis, most likely during the assembly process of pre-ribosomal particles. This Homo sapiens (Human) protein is Ribosomal oxygenase 2.